The following is a 341-amino-acid chain: Major histocompatibility complex class I-related protein 1 (341 aa).

Residues Met1–Thr18 form the signal peptide. An alpha-1 region spans residues Arg19 to Ser105. The tract at residues Arg19–Thr197 is antigen-binding cleft. Over Arg19 to Arg296 the chain is Extracellular. 8-(9H-purin-6-yl)-2-oxa-8-azabicyclo[3.3.1]nona-3,6-diene-4,6-dicarbaldehyde-binding residues include Tyr25 and Arg27. The 5-(2-oxoethylideneamino)-6-(D-ribitylamino)uracil site is built by Arg27, Ser42, and Lys61. 5-(2-oxopropylideneamino)-6-(D-ribitylamino)uracil-binding residues include Arg27, Ser42, and Lys61. The 7-hydroxy-6-methyl-8-(1-D-ribityl)lumazine site is built by Arg27, Ser42, and Lys61. 2 residues coordinate 8-(9H-purin-6-yl)-2-oxa-8-azabicyclo[3.3.1]nona-3,6-diene-4,6-dicarbaldehyde: Lys61 and His76. Lys61 is a 2-amino-4-oxopteridine-6-carbaldehyde binding site. A pyridoxal-binding site is contributed by Lys61. An N-linked (GlcNAc...) asparagine glycan is attached at Asn103. Residues Gly106–Thr197 are alpha-2. Residue Arg112 coordinates 8-(9H-purin-6-yl)-2-oxa-8-azabicyclo[3.3.1]nona-3,6-diene-4,6-dicarbaldehyde. Residues Arg112, Tyr170, and Gln171 each contribute to the 5-(2-oxoethylideneamino)-6-(D-ribitylamino)uracil site. Positions 112, 170, and 171 each coordinate 5-(2-oxopropylideneamino)-6-(D-ribitylamino)uracil. 7-hydroxy-6-methyl-8-(1-D-ribityl)lumazine contacts are provided by Arg112, Tyr170, and Gln171. 2 disulfide bridges follow: Cys116-Cys179 and Cys218-Cys274. The tract at residues Glu198 to Arg289 is alpha-3. The region spanning Pro200–Ser301 is the Ig-like C1-type domain. Positions Glu290–Arg296 are connecting peptide. Residues Val297–Ile317 traverse the membrane as a helical segment. The Cytoplasmic portion of the chain corresponds to Trp318–Ser341.

The protein belongs to the MHC class I family. In terms of assembly, heterotrimer that consists of MR1, B2M and metabolite antigen. Major classes of metabolite ligands presented by MR1 include riboflavin-related antigens, pyrimidines and ribityl lumazines, nucleobase adducts and folate derivatives. Forms reversible covalent Schiff base complexes with microbial pyrimidine-based metabolite, which serves as a molecular switch triggering complete folding, stable association with B2M and translocation of the ternary complex from endoplasmic reticulum to the plasma membrane. Alternatively, forms non-Schiff base complexes with ribityl lumazines. On antigen-presenting cells, the ternary complex interacts with TCR on MR1-restricted CD4- or CD8-positive T cell subsets. Interacts with TAPBP and TAPBPL chaperones in the endoplasmic reticulum. TAPBP associated or not with MHC class I peptide loading complex binds ligand-free MR1 or MR1-B2M complex, providing for stable MR1 pools ready for metabolite antigen processing. TAPBPL interacts with MR1 in a ligand-independent way; this interaction may stabilize MR1 pool and facilitate ligand loading and dissociation. Structurally, MR1-B2M heterodimer adopts a topology similar to classical MHC class I molecules, with alpha-1 and alpha-2 domains of MR1 forming the antigen-binding cleft composed of two alpha-helices resting on a floor of 7-stranded anti-parallel beta-pleated sheet. Post-translationally, N-glycosylated. In terms of tissue distribution, highly expressed thymus. Expressed in liver, kidney, spleen, heart, brain, lung, skeletal muscle and testis.

The protein localises to the cell membrane. Its subcellular location is the endoplasmic reticulum membrane. It localises to the golgi apparatus membrane. It is found in the early endosome membrane. The protein resides in the late endosome membrane. Antigen-presenting molecule specialized in displaying microbial pyrimidine-based metabolites to alpha-beta T cell receptors (TCR) on innate-type mucosal-associated invariant T (MAIT) cells. In complex with B2M preferentially presents riboflavin-derived metabolites to semi-invariant TRAV1 TCRs on MAIT cells, guiding immune surveillance of the microbial metabolome at mucosal epithelial barriers. Signature pyrimidine-based microbial antigens are generated via non-enzymatic condensation of metabolite intermediates of the riboflavin pathway with by-products arising from other metabolic pathways such as glycolysis. Typical potent antigenic metabolites are 5-(2-oxoethylideneamino)-6-D-ribitylaminouracil (5-OE-RU) and 5-(2-oxopropylideneamino)-6-D-ribitylaminouracil (5-OP-RU), products of condensation of 5-amino-6-D-ribityaminouracil (5-A-RU) with glyoxal or methylglyoxal by-products, respectively. May present microbial antigens to various TRAV1-negative MAIT cell subsets, providing for unique recognition of diverse microbes, including pathogens that do not synthesize riboflavin. Upon antigen recognition, elicits rapid innate-type MAIT cell activation to eliminate pathogenic microbes by directly killing infected cells. During T cell development, drives thymic selection and post-thymic terminal differentiation of MAIT cells in a process dependent on commensal microflora. Acts as an immune sensor of cancer cell metabolome. May present a tumor-specific or -associated metabolite essential for cancer cell survival to a pan-cancer TCR on a non-MAIT CD8-positive T cell clone, triggering T cell-mediated killing of a wide range of cancer cell types. May present tumor-enriched pyridoxal and pyridoxal 5'-phosphate antigens, enabling preferential recognition of cancer cells. Presents nucleobase carbonyl adducts generated during oxidative stress. Captures M3Ade, a nucleobase adduct composed of one adenine modified by a malondialdehyde trimer, for recognition by MR1-restricted T cell clones expressing a polyclonal TCR repertoire. This chain is Major histocompatibility complex class I-related protein 1, found in Mus musculus (Mouse).